Consider the following 547-residue polypeptide: DNA mismatch repair protein MutL (547 aa).

The protein belongs to the DNA mismatch repair MutL/HexB family.

This protein is involved in the repair of mismatches in DNA. It is required for dam-dependent methyl-directed DNA mismatch repair. May act as a 'molecular matchmaker', a protein that promotes the formation of a stable complex between two or more DNA-binding proteins in an ATP-dependent manner without itself being part of a final effector complex. The polypeptide is DNA mismatch repair protein MutL (Deinococcus radiodurans (strain ATCC 13939 / DSM 20539 / JCM 16871 / CCUG 27074 / LMG 4051 / NBRC 15346 / NCIMB 9279 / VKM B-1422 / R1)).